Here is a 140-residue protein sequence, read N- to C-terminus: Large ribosomal subunit protein uL14x/uL14z/uL14y (140 aa).

It belongs to the universal ribosomal protein uL14 family.

This is Large ribosomal subunit protein uL14x/uL14z/uL14y (RPL23A) from Arabidopsis thaliana (Mouse-ear cress).